Reading from the N-terminus, the 322-residue chain is MNSIHGHYHIQLSNYSAGENLQSATLTEGVIGAHRVKVETALSHSNLQKKLSATIKHNQSGRSMLDRKLTSDGKANQRSSFTFSMIMYRMIHFVLSTRVPAVRESVANYGGNINFKFAQTKGAFLHKIIKHSDTASGVCEALCAHWIRSHAQGQSLFDQLYVGGRKGKFQIDTLYSIKQLQIDGCKADVDQDEVTLDWFKKNGISERMIERHCLLRPVDVTGTTESEGLDQLLNAILDTHGIGYGYKKIHLSGQMSAHAIAAYVNEKSGVTFFDPNFGEFHFSDKEKFRKWFTNSFWGNSMYHYPLGVGQRFRVLTFDSKEV.

Residues C139, H258, and D274 contribute to the active site.

It belongs to the peptidase C58 family. As to quaternary structure, interacts with human ARHA.

The protein resides in the secreted. Cysteine protease, which is translocated into infected cells and plays a central role in pathogenesis by cleaving the C-terminus end of the human small GTPase RhoA/ARHA, a regulator of cytoskeleton. Once cleaved, ARHA loses its lipid modification, and is released from the cell membrane, leading to the subsequent disruption of actin cytoskeleton of the host cell. This Yersinia pestis protein is Cysteine protease YopT (yopT).